Consider the following 122-residue polypeptide: Small ribosomal subunit protein uS13 (122 aa).

Residues 99 to 122 (RGQRTHTNARTRKGPAKAIAGKKK) are disordered.

This sequence belongs to the universal ribosomal protein uS13 family. As to quaternary structure, part of the 30S ribosomal subunit. Forms a loose heterodimer with protein S19. Forms two bridges to the 50S subunit in the 70S ribosome.

Located at the top of the head of the 30S subunit, it contacts several helices of the 16S rRNA. In the 70S ribosome it contacts the 23S rRNA (bridge B1a) and protein L5 of the 50S subunit (bridge B1b), connecting the 2 subunits; these bridges are implicated in subunit movement. Contacts the tRNAs in the A and P-sites. The protein is Small ribosomal subunit protein uS13 of Bradyrhizobium sp. (strain BTAi1 / ATCC BAA-1182).